We begin with the raw amino-acid sequence, 75 residues long: Putative snRNP Sm-like protein (75 aa).

One can recognise a Sm domain in the interval 4 to 75 (RPLDVIHRSL…NVLAISPTEE (72 aa)).

Belongs to the snRNP Sm proteins family.

In Pyrococcus horikoshii (strain ATCC 700860 / DSM 12428 / JCM 9974 / NBRC 100139 / OT-3), this protein is Putative snRNP Sm-like protein.